The primary structure comprises 217 residues: Homologous-pairing protein 2 homolog (217 aa).

The stretch at 93–153 forms a coiled coil; that stretch reads IVALTAKVQS…LKNIKAATNH (61 aa). Positions 118–182 are DNA-binding; it reads SSALTTPEMQ…WRKRKRMATE (65 aa).

The protein belongs to the HOP2 family. In terms of assembly, interacts with the DNA-binding domain of the nuclear receptors NR3C1/GR, ESR2/ER-beta, THRB and RXRA. Forms a stable heterodimer with MND1. Interacts with PSMC3/TBP1. Post-translationally, PTM: Phosphorylated by PKA, PKC and MAPK. Highly expressed in testis and colon.

The protein localises to the nucleus. Its function is as follows. Plays an important role in meiotic recombination. Stimulates DMC1-mediated strand exchange required for pairing homologous chromosomes during meiosis. The complex PSMC3IP/MND1 binds DNA, stimulates the recombinase activity of DMC1 as well as DMC1 D-loop formation from double-strand DNA. This complex stabilizes presynaptic RAD51 and DMC1 filaments formed on single strand DNA to capture double-strand DNA. This complex stimulates both synaptic and presynaptic critical steps in RAD51 and DMC1-promoted homologous pairing. May inhibit HIV-1 viral protein TAT activity and modulate the activity of proteasomes through association with PSMC3. Acts as a tissue specific coactivator of hormone-dependent transcription mediated by nuclear receptors. The polypeptide is Homologous-pairing protein 2 homolog (PSMC3IP) (Homo sapiens (Human)).